We begin with the raw amino-acid sequence, 180 residues long: Cell division protein SepF (180 aa).

Residues 21-40 (LDDDYDDGRAVGRDDRRAMH) are disordered. The segment covering 27–40 (DGRAVGRDDRRAMH) has biased composition (basic and acidic residues).

It belongs to the SepF family. As to quaternary structure, homodimer. Interacts with FtsZ.

The protein resides in the cytoplasm. Cell division protein that is part of the divisome complex and is recruited early to the Z-ring. Probably stimulates Z-ring formation, perhaps through the cross-linking of FtsZ protofilaments. Its function overlaps with FtsA. In Frankia casuarinae (strain DSM 45818 / CECT 9043 / HFP020203 / CcI3), this protein is Cell division protein SepF.